The primary structure comprises 349 residues: Probable dual-specificity RNA methyltransferase RlmN (349 aa).

The active-site Proton acceptor is the E94. A Radical SAM core domain is found at 100 to 321; that stretch reads DEDRATLCVS…TQHGVFATIR (222 aa). C107 and C332 are oxidised to a cystine. 3 residues coordinate [4Fe-4S] cluster: C114, C118, and C121. Residues 159 to 160, S191, 213 to 215, and H289 contribute to the S-adenosyl-L-methionine site; these read GE and SMH. C332 serves as the catalytic S-methylcysteine intermediate.

Belongs to the radical SAM superfamily. RlmN family. [4Fe-4S] cluster serves as cofactor.

The protein resides in the cytoplasm. It carries out the reaction adenosine(2503) in 23S rRNA + 2 reduced [2Fe-2S]-[ferredoxin] + 2 S-adenosyl-L-methionine = 2-methyladenosine(2503) in 23S rRNA + 5'-deoxyadenosine + L-methionine + 2 oxidized [2Fe-2S]-[ferredoxin] + S-adenosyl-L-homocysteine. It catalyses the reaction adenosine(37) in tRNA + 2 reduced [2Fe-2S]-[ferredoxin] + 2 S-adenosyl-L-methionine = 2-methyladenosine(37) in tRNA + 5'-deoxyadenosine + L-methionine + 2 oxidized [2Fe-2S]-[ferredoxin] + S-adenosyl-L-homocysteine. In terms of biological role, specifically methylates position 2 of adenine 2503 in 23S rRNA and position 2 of adenine 37 in tRNAs. The chain is Probable dual-specificity RNA methyltransferase RlmN from Phocaeicola vulgatus (strain ATCC 8482 / DSM 1447 / JCM 5826 / CCUG 4940 / NBRC 14291 / NCTC 11154) (Bacteroides vulgatus).